The sequence spans 158 residues: Fucolectin (158 aa).

The segment at 16–148 (KATQSAQLRG…TSESLHLCEV (133 aa)) is F5/8 type C-like. Ca(2+)-binding residues include Asn35, Asp38, Asn40, and Ser49. 3 disulfide bridges follow: Cys50-Cys146, Cys82-Cys83, and Cys108-Cys124. Alpha-L-fucose contacts are provided by His52 and Arg79. A Cell attachment site motif is present at residues 79 to 81 (RGD). Residue Arg86 coordinates alpha-L-fucose. Cys146 and Glu147 together coordinate Ca(2+).

This sequence belongs to the fucolectin family. Homotrimer.

Its subcellular location is the secreted. Acts as a defensive agent. Recognizes blood group fucosylated oligosaccharides including A, B, H and Lewis B-type antigens. Does not recognize Lewis A antigen and has low affinity for monovalent haptens. The polypeptide is Fucolectin (Anguilla anguilla (European freshwater eel)).